Consider the following 199-residue polypeptide: Transmembrane protein 9B (199 aa).

The signal sequence occupies residues 1-34 (MASLWCGNLLRLGSGLSMSCLALSVLLLAQLTGA). The N-linked (GlcNAc...) asparagine glycan is linked to asparagine 61. Residues 106–126 (IIIYLSILGLLLLYMVYLTLV) traverse the membrane as a helical segment. Phosphoserine is present on residues serine 143 and serine 190.

The protein belongs to the TMEM9 family. Post-translationally, N-glycosylated.

It is found in the lysosome membrane. It localises to the early endosome membrane. Enhances production of pro-inflammatory cytokines induced by TNF, IL1B, and TLR ligands. Has a role in TNF activation of both the NF-kappaB and MAPK pathways. The chain is Transmembrane protein 9B (Tmem9b) from Mus musculus (Mouse).